Reading from the N-terminus, the 242-residue chain is E3 ubiquitin-protein ligase AIRP2 (242 aa).

Residues 146–184 (CGICLEIRNKVVLPTCNHSMCINCYRNWRARSQSCPFCR) form an RING-type zinc finger.

Interacts with ATP1/SDIRIP1. Expressed in germinating seeds, flower organs and siliques.

Its subcellular location is the cytoplasm. It localises to the cytosol. The enzyme catalyses S-ubiquitinyl-[E2 ubiquitin-conjugating enzyme]-L-cysteine + [acceptor protein]-L-lysine = [E2 ubiquitin-conjugating enzyme]-L-cysteine + N(6)-ubiquitinyl-[acceptor protein]-L-lysine.. Functionally, possesses E3 ubiquitin-protein ligase activity in vitro when associated with the E2 enzyme UBC8 in vitro. Plays combinatory roles with AIRP1 in the positive regulation of the abscisic acid-mediated drought stress response. Plays a positive role in abscisic acid- and high salinity-regulated seed germination through the ubiquitin-proteasome-dependent down-regulation of ATP1/SDIRIP1. This chain is E3 ubiquitin-protein ligase AIRP2, found in Arabidopsis thaliana (Mouse-ear cress).